A 160-amino-acid chain; its full sequence is Major pollen allergen Aln g 1 (160 aa).

Belongs to the BetVI family.

This is Major pollen allergen Aln g 1 from Alnus glutinosa (European alder).